The sequence spans 800 residues: DNA topoisomerase 4 subunit A (800 aa).

The 465-residue stretch at 31-495 (LPDVRDGLKP…EIEEIKIDKE (465 aa)) folds into the Topo IIA-type catalytic domain. Tyr119 acts as the O-(5'-phospho-DNA)-tyrosine intermediate in catalysis.

It belongs to the type II topoisomerase GyrA/ParC subunit family. ParC type 2 subfamily. As to quaternary structure, heterotetramer composed of ParC and ParE.

It is found in the cell membrane. It carries out the reaction ATP-dependent breakage, passage and rejoining of double-stranded DNA.. Topoisomerase IV is essential for chromosome segregation. It relaxes supercoiled DNA. Performs the decatenation events required during the replication of a circular DNA molecule. The sequence is that of DNA topoisomerase 4 subunit A from Staphylococcus aureus (strain MSSA476).